The following is a 101-amino-acid chain: NADH-quinone oxidoreductase subunit K (101 aa).

3 consecutive transmembrane segments (helical) span residues 4-24 (LADYLILGALLFSLGVAGIFI), 30-50 (LVLLMCIELILLAVNMNFIAF), and 61-81 (VFVFFILTVAAAEAAIGLAIV).

The protein belongs to the complex I subunit 4L family. In terms of assembly, NDH-1 is composed of 14 different subunits. Subunits NuoA, H, J, K, L, M, N constitute the membrane sector of the complex.

It localises to the cell inner membrane. The enzyme catalyses a quinone + NADH + 5 H(+)(in) = a quinol + NAD(+) + 4 H(+)(out). In terms of biological role, NDH-1 shuttles electrons from NADH, via FMN and iron-sulfur (Fe-S) centers, to quinones in the respiratory chain. The immediate electron acceptor for the enzyme in this species is believed to be ubiquinone. Couples the redox reaction to proton translocation (for every two electrons transferred, four hydrogen ions are translocated across the cytoplasmic membrane), and thus conserves the redox energy in a proton gradient. This Alkalilimnicola ehrlichii (strain ATCC BAA-1101 / DSM 17681 / MLHE-1) protein is NADH-quinone oxidoreductase subunit K.